Consider the following 455-residue polypeptide: Post-transcriptional regulator MTA (455 aa).

The segment at 17-163 is disordered; the sequence is DSVSSSEFDE…QVNCQRQDDD (147 aa). Positions 23–42 are enriched in acidic residues; it reads EFDESRDDETDAPTLEDEQL. The span at 88–98 shows a compositional bias: low complexity; sequence SPLSRPRSPSP. 3 consecutive short sequence motifs (nuclear localization signal) follow at residues 101 to 107, 121 to 130, and 143 to 152; these read RYGKKIK, KRPRRRPRDR, and RAAPKRATRR. Zn(2+) is bound by residues Cys-333, His-423, Cys-427, and Cys-432. The segment at 333–432 adopts a CHC2-type zinc-finger fold; sequence CVFDKQSELA…HHSLCRNSEC (100 aa).

This sequence belongs to the HHV-1 ICP27 protein family. Homodimer. Homodimerization is required for transactivation. Interacts with host ALYREF. Associates in a complex with RNA, and host export factors NXF1/TAP and ALYREF; these interactions allow nuclear export of viral transcripts. Interacts with protein K-bZIP/K8; this interaction promotes viral gene expression during lytic infection. Interacts with host PABPC1. Interacts with host AGO2 and TNRC6A; these interactions inhibit host P-body formation. Interacts with PRKRA and EIF2AK2/PKR; these interactions inhibit host stress granule formation. Post-translationally, proteolytically cleaved by host caspase-7 (CASP7), leading to its inactivation, thereby preventing expression of viral lytic genes.

The protein resides in the host cytoplasm. Its subcellular location is the host nucleus. Post-transcriptional regulator that plays an essential role in the expression of viral lytic genes and productive viral replication. Possesses numerous activities that promote the expression of viral genes including enhancement of RNA stability, promotion of RNA splicing and stimulation of protein translation often via its ability to interact with different cellular cofactors. Stabilizes polyadenylated nuclear (PAN) RNA by cooperative binding to a 9-nt core of the MRE (MTA responsive element) together with host PABPC1. Functions as a viral splicing factor and promotes expression of intron-containing viral lytic genes. Protects viral transcripts from specific nuclear RNA decay pathways by preventing host MTREX recruitment that promotes unwinding and degradation of structured RNA substrates. Plays a role in the inhibition of host P-body formation by altering the scaffolding activity of TNRC6A at the initial stage thereby enhancing virus production. Also inhibits host stress granule formation by blocking autophosphorylation of EIF2AK2/PKR and its subsequent binding to dsRNA. The sequence is that of Post-transcriptional regulator MTA from Human herpesvirus 8 type P (isolate GK18) (HHV-8).